The primary structure comprises 220 residues: Octanoyltransferase (220 aa).

The region spanning 31-217 is the BPL/LPL catalytic domain; it reads ENTPDEIWLV…HFAEILGYNA (187 aa). Residues 70-77, 146-148, and 159-161 each bind substrate; these read RGGQITYH, SLG, and GLA. The active-site Acyl-thioester intermediate is the cysteine 177.

It belongs to the LipB family.

The protein localises to the cytoplasm. It carries out the reaction octanoyl-[ACP] + L-lysyl-[protein] = N(6)-octanoyl-L-lysyl-[protein] + holo-[ACP] + H(+). It participates in protein modification; protein lipoylation via endogenous pathway; protein N(6)-(lipoyl)lysine from octanoyl-[acyl-carrier-protein]: step 1/2. Catalyzes the transfer of endogenously produced octanoic acid from octanoyl-acyl-carrier-protein onto the lipoyl domains of lipoate-dependent enzymes. Lipoyl-ACP can also act as a substrate although octanoyl-ACP is likely to be the physiological substrate. This Actinobacillus succinogenes (strain ATCC 55618 / DSM 22257 / CCUG 43843 / 130Z) protein is Octanoyltransferase.